The following is a 342-amino-acid chain: N-acetyl-gamma-glutamyl-phosphate reductase (342 aa).

Cysteine 149 is an active-site residue.

Belongs to the NAGSA dehydrogenase family. Type 1 subfamily.

It is found in the cytoplasm. The catalysed reaction is N-acetyl-L-glutamate 5-semialdehyde + phosphate + NADP(+) = N-acetyl-L-glutamyl 5-phosphate + NADPH + H(+). Its pathway is amino-acid biosynthesis; L-arginine biosynthesis; N(2)-acetyl-L-ornithine from L-glutamate: step 3/4. Catalyzes the NADPH-dependent reduction of N-acetyl-5-glutamyl phosphate to yield N-acetyl-L-glutamate 5-semialdehyde. The sequence is that of N-acetyl-gamma-glutamyl-phosphate reductase from Ruegeria pomeroyi (strain ATCC 700808 / DSM 15171 / DSS-3) (Silicibacter pomeroyi).